A 223-amino-acid chain; its full sequence is Ribose-5-phosphate isomerase A (223 aa).

Substrate contacts are provided by residues 32-35 (TGST), 85-88 (DGAD), and 98-101 (KGGG). E107 serves as the catalytic Proton acceptor. K125 contributes to the substrate binding site.

The protein belongs to the ribose 5-phosphate isomerase family. In terms of assembly, homodimer.

The enzyme catalyses aldehydo-D-ribose 5-phosphate = D-ribulose 5-phosphate. Its pathway is carbohydrate degradation; pentose phosphate pathway; D-ribose 5-phosphate from D-ribulose 5-phosphate (non-oxidative stage): step 1/1. In terms of biological role, catalyzes the reversible conversion of ribose-5-phosphate to ribulose 5-phosphate. The sequence is that of Ribose-5-phosphate isomerase A from Pseudomonas syringae pv. syringae (strain B728a).